Here is a 511-residue protein sequence, read N- to C-terminus: DEP domain-containing protein 7 (511 aa).

A DEP domain is found at 46-136 (LQTQVEVKKR…SSCSLYRFTT (91 aa)).

This sequence belongs to the DEPDC7 family.

This is DEP domain-containing protein 7 (DEPDC7) from Pongo abelii (Sumatran orangutan).